The following is a 478-amino-acid chain: Cytochrome c-552 (478 aa).

The signal sequence occupies residues 1-26 (MTRIKINARRIFSLLIPFFFFTSVHA). His-94 is a binding site for heme c. The heme site is built by Cys-122, Cys-125, and Lys-126. Cys-160, Cys-163, His-164, Cys-209, Cys-212, and His-213 together coordinate heme c. The Ca(2+) site is built by Glu-215, Tyr-216, Lys-261, and Gln-263. Tyr-216 is a binding site for substrate. A substrate-binding site is contributed by His-264. 9 residues coordinate heme c: His-275, Cys-282, Cys-285, His-286, His-301, Cys-314, Cys-317, His-318, and His-393.

The protein belongs to the cytochrome c-552 family. It depends on Ca(2+) as a cofactor. Heme c is required as a cofactor.

Its subcellular location is the periplasm. The enzyme catalyses 6 Fe(III)-[cytochrome c] + NH4(+) + 2 H2O = 6 Fe(II)-[cytochrome c] + nitrite + 8 H(+). Its pathway is nitrogen metabolism; nitrate reduction (assimilation). Catalyzes the reduction of nitrite to ammonia, consuming six electrons in the process. The polypeptide is Cytochrome c-552 (Escherichia coli O157:H7 (strain EC4115 / EHEC)).